Reading from the N-terminus, the 1042-residue chain is Aldehyde reductase lnaA (1042 aa).

The adenylation (A) domain stretch occupies residues 29 to 425; the sequence is HAFLNPSAMA…GRRDHQVKVR (397 aa). The Carrier domain occupies 532–609; it reads DNEDSTRGKL…RLAGILEERI (78 aa). Serine 569 carries the O-(pantetheine 4'-phosphoryl)serine modification. A short-chain dehydrogenase/reductase (R) domain region spans residues 655 to 897; it reads LTGATGFVGS…FVPVDYVNAV (243 aa).

The protein belongs to the NRP synthetase family.

It catalyses the reaction L-tyrosinal + AMP + diphosphate + NADP(+) = L-tyrosine + ATP + NADPH + H(+). It participates in secondary metabolite biosynthesis. In terms of biological role, non-canonical nonribosomal peptide synthetase; part of the lna gene cluster that mediates the biosynthesis of diastereomeric piperazines. Lna and lnb clusters encode sets of enzymes that produce overlapping sets of previously undescribed metabolites such as piperazinomycin-like metabolites or morpholine. The lna and lnb biosynthetic pathways appear to be part of a signaling network that controls the formation of sclerotia, a resilient overwintering structure. One primary function of the non-canonical nonribosomal peptide synthetases lnaA and lnbA consists in the reduction of L-tyrosine. The presence in the clusters of tailoring enzymes such as the oxidoreductases lnaB, lnbB, lnaE or lnbE, as well as of the cytochrome P450 monooxygenases lnaC, lnaD, or lnbC, might explain formation of various diastereomeric piperazines. This chain is Aldehyde reductase lnaA, found in Aspergillus flavus (strain ATCC 200026 / FGSC A1120 / IAM 13836 / NRRL 3357 / JCM 12722 / SRRC 167).